The following is a 300-amino-acid chain: Metal tolerance protein 12 (300 aa).

The Cytoplasmic portion of the chain corresponds to 1–26 (MESPESFSTMFMKPIRHILSEKKSRK). Residues 27–47 (IALFLLINTAYMVVEFVAGFM) form a helical membrane-spanning segment. Topologically, residues 48–50 (SNS) are vacuolar. Residues 51–71 (LGLISDACHMLFDCAALAIGL) traverse the membrane as a helical segment. Residues 72–91 (YASYISRLPANHQYNYGRGR) are Cytoplasmic-facing. A helical transmembrane segment spans residues 92-112 (FEVLSGYVNAVFLVLVGALIV). Over 113–128 (LESIERILDPQEISTN) the chain is Vacuolar. The helical transmembrane segment at 129–149 (SLLVVSVGGLLVNIVGLIFFH) threads the bilayer. Residues 150–160 (EEHHHAHGGSG) lie on the Cytoplasmic side of the membrane. A helical membrane pass occupies residues 161-181 (IFLHVLADTMGSVGVVISTLL). The Vacuolar segment spans residues 182-186 (IKYKG). The helical transmembrane segment at 187-207 (WLVADPASSIFISILIIASVI) threads the bilayer. The Cytoplasmic segment spans residues 208 to 300 (PLLRNSAEIL…WTLQVESVNS (93 aa)).

The protein belongs to the cation diffusion facilitator (CDF) transporter (TC 2.A.4) family. SLC30A subfamily.

Its subcellular location is the vacuole membrane. Functionally, involved in sequestration of excess metal in the cytoplasm into vacuoles to maintain metal homeostasis. The polypeptide is Metal tolerance protein 12 (MTP12) (Arabidopsis thaliana (Mouse-ear cress)).